Consider the following 466-residue polypeptide: Adenosylhomocysteinase (466 aa).

Substrate is bound by residues T57, D132, and E192. 193 to 195 (TTT) contacts NAD(+). 2 residues coordinate substrate: K222 and D226. Residues N227, 256–261 (GYGDVG), E279, N314, 335–337 (IGH), and N380 contribute to the NAD(+) site.

Belongs to the adenosylhomocysteinase family. NAD(+) is required as a cofactor.

It is found in the cytoplasm. The enzyme catalyses S-adenosyl-L-homocysteine + H2O = L-homocysteine + adenosine. It participates in amino-acid biosynthesis; L-homocysteine biosynthesis; L-homocysteine from S-adenosyl-L-homocysteine: step 1/1. Its function is as follows. May play a key role in the regulation of the intracellular concentration of adenosylhomocysteine. This chain is Adenosylhomocysteinase, found in Rhizobium leguminosarum bv. trifolii (strain WSM2304).